A 324-amino-acid chain; its full sequence is Glyoxylate/hydroxypyruvate reductase B (324 aa).

Residues arginine 237 and glutamate 266 contribute to the active site. Histidine 285 acts as the Proton donor in catalysis.

The protein belongs to the D-isomer specific 2-hydroxyacid dehydrogenase family. GhrB subfamily. In terms of assembly, homodimer.

The protein localises to the cytoplasm. It carries out the reaction glycolate + NADP(+) = glyoxylate + NADPH + H(+). The catalysed reaction is (R)-glycerate + NAD(+) = 3-hydroxypyruvate + NADH + H(+). The enzyme catalyses (R)-glycerate + NADP(+) = 3-hydroxypyruvate + NADPH + H(+). In terms of biological role, catalyzes the NADPH-dependent reduction of glyoxylate and hydroxypyruvate into glycolate and glycerate, respectively. The protein is Glyoxylate/hydroxypyruvate reductase B of Salmonella heidelberg (strain SL476).